The primary structure comprises 92 residues: C-C motif chemokine 4 (92 aa).

Residues 1–23 (MKLCVTVLSLLVLAAAFCSPALS) form the signal peptide. 2 cysteine pairs are disulfide-bonded: Cys-34–Cys-58 and Cys-35–Cys-74.

This sequence belongs to the intercrine beta (chemokine CC) family. As to quaternary structure, homodimer. Interacts with CCR5. As to expression, detected in peripheral blood mononuclear cells and lymph nodes.

Its subcellular location is the secreted. Functionally, monokine with inflammatory and chemokinetic properties. This is C-C motif chemokine 4 (CCL4) from Macaca mulatta (Rhesus macaque).